The primary structure comprises 206 residues: Large ribosomal subunit protein uL4 (206 aa).

The disordered stretch occupies residues 43–78 (ARSGNRKQKDREEVKHTTKKPWRQKGTGRARAGMSS). Positions 49-58 (KQKDREEVKH) are enriched in basic and acidic residues. The span at 59-70 (TTKKPWRQKGTG) shows a compositional bias: basic residues.

This sequence belongs to the universal ribosomal protein uL4 family. As to quaternary structure, part of the 50S ribosomal subunit.

One of the primary rRNA binding proteins, this protein initially binds near the 5'-end of the 23S rRNA. It is important during the early stages of 50S assembly. It makes multiple contacts with different domains of the 23S rRNA in the assembled 50S subunit and ribosome. In terms of biological role, forms part of the polypeptide exit tunnel. The chain is Large ribosomal subunit protein uL4 from Ralstonia nicotianae (strain ATCC BAA-1114 / GMI1000) (Ralstonia solanacearum).